We begin with the raw amino-acid sequence, 576 residues long: Trehalase (576 aa).

Residues 1–20 (MTWELHLLLLLGLGLRSQEA) form the signal peptide. Asparagine 75 carries an N-linked (GlcNAc...) asparagine glycan. Residues arginine 165, 172 to 173 (WD), asparagine 209, and 218 to 220 (RSQ) contribute to the substrate site. Asparagine 258 is a glycosylation site (N-linked (GlcNAc...) asparagine). Substrate contacts are provided by residues 283 to 285 (RPE) and glycine 316. Residue aspartate 318 is the Proton donor/acceptor of the active site. N-linked (GlcNAc...) asparagine glycosylation occurs at asparagine 366. Glutamate 511 serves as the catalytic Proton donor/acceptor. Substrate is bound at residue glutamate 526. Serine 553 carries GPI-anchor amidated serine lipidation. Residues 554-576 (GTQLASLGPHCLVAALLLSLLLQ) constitute a propeptide, removed in mature form.

This sequence belongs to the glycosyl hydrolase 37 family. Homodimer; disulfide-linked.

The protein localises to the cell membrane. The catalysed reaction is alpha,alpha-trehalose + H2O = alpha-D-glucose + beta-D-glucose. Its function is as follows. Intestinal trehalase is probably involved in the hydrolysis of ingested trehalose. This Mus musculus (Mouse) protein is Trehalase.